A 1470-amino-acid polypeptide reads, in one-letter code: Roundabout homolog 2 (1470 aa).

The signal sequence occupies residues 1 to 21; it reads MNPLMFTLLLLFGFLCIQIDG. At 22-863 the chain is on the extracellular side; it reads SRLRQEDFPP…EQITDVVKQP (842 aa). 5 Ig-like C2-type domains span residues 31–127, 133–220, 225–309, 318–413, and 422–508; these read PRIV…ASLE, DDFR…AELT, PTFL…ATLT, PQFV…LEVT, and PIIL…AVLD. Cys-52 and Cys-110 form a disulfide bridge. Asn-123 carries an N-linked (GlcNAc...) asparagine glycan. Disulfide bonds link Cys-154–Cys-203, Cys-246–Cys-293, and Cys-339–Cys-395. N-linked (GlcNAc...) asparagine glycosylation is present at Asn-430. A disulfide bridge links Cys-443 with Cys-492. Fibronectin type-III domains lie at 528 to 622, 641 to 739, and 743 to 840; these read PPSK…TQDI, VVVR…TEEA, and PPQS…IGGR. N-linked (GlcNAc...) asparagine glycans are attached at residues Asn-756, Asn-786, Asn-793, and Asn-849. The helical transmembrane segment at 864–884 threads the bilayer; the sequence is AFIAGIGGACWVILMGFSIWL. Residues 885–1470 are Cytoplasmic-facing; it reads YWRRKKRKGL…GSNSQGQFTE (586 aa). Disordered stretches follow at residues 1036-1089, 1129-1159, 1190-1371, and 1383-1470; these read GFGY…LPGT, EDRVPTPPVRGVASSPAISFGQQSTATLTPS, IQSN…DCPA, and DWIN…QFTE. The span at 1144 to 1158 shows a compositional bias: polar residues; the sequence is PAISFGQQSTATLTP. Thr-1157 is subject to Phosphothreonine. A Phosphoserine modification is found at Ser-1159. The segment covering 1194-1203 has biased composition (pro residues); sequence TPPPQPPAPP. Over residues 1215 to 1231 the composition is skewed to acidic residues; it reads LETDVPDEDADDEEEPL. A compositionally biased stretch (polar residues) spans 1243 to 1288; it reads TPGSSMDNLDSSVTGKAFSSSQRQRPTSPFSTDSNTSAAQNQSQRP. Pro residues predominate over residues 1315 to 1325; that stretch reads DLPPPPDPPPG. Positions 1328 to 1343 are enriched in polar residues; the sequence is LRQQIGLSQHSGNVEN. The span at 1413 to 1437 shows a compositional bias: low complexity; that stretch reads SKPSFPSPGGHSSSGTSSSKGSTGP. Positions 1461–1470 are enriched in polar residues; the sequence is GSNSQGQFTE.

This sequence belongs to the immunoglobulin superfamily. ROBO family. As to quaternary structure, interacts with SLIT2. As to expression, expressed in embryonal spinal cord.

It is found in the membrane. In terms of biological role, receptor for SLIT2, and probably SLIT1, which are thought to act as molecular guidance cue in cellular migration, including axonal navigation at the ventral midline of the neural tube and projection of axons to different regions during neuronal development. The chain is Roundabout homolog 2 (Robo2) from Mus musculus (Mouse).